The sequence spans 371 residues: Putative glutamate--cysteine ligase 2 (371 aa).

The protein belongs to the glutamate--cysteine ligase type 2 family. YbdK subfamily. Homodimer.

The catalysed reaction is L-cysteine + L-glutamate + ATP = gamma-L-glutamyl-L-cysteine + ADP + phosphate + H(+). ATP-dependent carboxylate-amine ligase which exhibits weak glutamate--cysteine ligase activity. This chain is Putative glutamate--cysteine ligase 2, found in Klebsiella pneumoniae (strain 342).